Here is a 70-residue protein sequence, read N- to C-terminus: MKQDIHPKYNEVTVVCANCGNSFVTRSTRPSIKVDICNNCHPFYTGKQSIVDTAGRVERFNKRFAKKAQA.

This sequence belongs to the bacterial ribosomal protein bL31 family. Type A subfamily. In terms of assembly, part of the 50S ribosomal subunit.

Its function is as follows. Binds the 23S rRNA. The protein is Large ribosomal subunit protein bL31 of Chlorobium chlorochromatii (strain CaD3).